Here is a 311-residue protein sequence, read N- to C-terminus: CARD domain-containing protein E10 (311 aa).

The 90-residue stretch at 21–110 (IWDVERLCLE…EHLVDLLERA (90 aa)) folds into the CARD domain. 3 disordered regions span residues 125 to 181 (ESGA…GGVY), 203 to 230 (GAGR…GGRD), and 243 to 311 (IPEP…FFCC). The segment covering 140-152 (EDNSGYTALLPTN) has biased composition (polar residues). Positions 252-272 (SGGGGRGGGVRYDAGGDGRLG) are enriched in gly residues.

The protein resides in the host cell membrane. Activates host NF-kappa-B and JNK pathways. Induces hyperphosphorylation and redistribution of host bcl-10 from the cytoplasm to the plasma membrane. The inhibitory effect of cellular bcl-10 on NF-kappa-B pathway is then overcome allowing NF-kappa-B activation. The sequence is that of CARD domain-containing protein E10 (E10) from Equus caballus (Horse).